We begin with the raw amino-acid sequence, 358 residues long: uncharacterized protein (358 aa).

Positions 324–358 (DMEVEETPPTTNKDLPRGATQPKRNSIKRVSKLID) are disordered. Basic residues predominate over residues 348 to 358 (NSIKRVSKLID).

This is an uncharacterized protein from Mycoplasma pneumoniae (strain ATCC 29342 / M129 / Subtype 1) (Mycoplasmoides pneumoniae).